The following is a 1191-amino-acid chain: WASH complex subunit homolog 5 (1191 aa).

The protein belongs to the strumpellin family. In terms of assembly, component of the WASH complex.

It localises to the early endosome. Acts at least in part as component of the WASH complex which may regulate wash nucleation-promoting factor (NPF) activity and is required for its membrane targeting during endosomal sorting. During embryogenesis, not involved in the wash-dependent developmental migration of hemocytes anteriorly from the tail. The chain is WASH complex subunit homolog 5 from Drosophila melanogaster (Fruit fly).